Consider the following 166-residue polypeptide: Transcription antitermination protein NusB (166 aa).

Positions 1–18 (MISDESDRFNPRDPKPAD) are enriched in basic and acidic residues. Residues 1 to 30 (MISDESDRFNPRDPKPADAGKPSKSAKRRE) form a disordered region.

Belongs to the NusB family.

Functionally, involved in transcription antitermination. Required for transcription of ribosomal RNA (rRNA) genes. Binds specifically to the boxA antiterminator sequence of the ribosomal RNA (rrn) operons. The polypeptide is Transcription antitermination protein NusB (Pseudomonas fluorescens (strain Pf0-1)).